A 537-amino-acid polypeptide reads, in one-letter code: T-complex protein 1 subunit theta (537 aa).

The protein belongs to the TCP-1 chaperonin family. As to quaternary structure, heterooligomeric complex.

The protein resides in the cytoplasm. Molecular chaperone; assists the folding of proteins upon ATP hydrolysis. Known to play a role, in vitro, in the folding of actin and tubulin. This is T-complex protein 1 subunit theta (cct8) from Dictyostelium discoideum (Social amoeba).